A 164-amino-acid chain; its full sequence is MTTAFYPGSFDPITNGHVDVLVQALNVAEKVIVAIGIHPGKAPLFSFEERAELIRLSLAEALPGKSANITVVAFDNLVVDAARAHGATLLIRGLRDGTDLDYEMQMAGMNRTMAPDIQTIFLPAGTASRPITATLVRQIAAMGGDVSAFVPAAVLQALTSKRKA.

S9 contributes to the substrate binding site. Residues 9 to 10 (SF) and H17 contribute to the ATP site. 3 residues coordinate substrate: K41, V78, and R92. ATP-binding positions include 93–95 (GLR), E103, and 128–134 (SRPITAT).

Belongs to the bacterial CoaD family. In terms of assembly, homohexamer. It depends on Mg(2+) as a cofactor.

It localises to the cytoplasm. The catalysed reaction is (R)-4'-phosphopantetheine + ATP + H(+) = 3'-dephospho-CoA + diphosphate. It functions in the pathway cofactor biosynthesis; coenzyme A biosynthesis; CoA from (R)-pantothenate: step 4/5. In terms of biological role, reversibly transfers an adenylyl group from ATP to 4'-phosphopantetheine, yielding dephospho-CoA (dPCoA) and pyrophosphate. The sequence is that of Phosphopantetheine adenylyltransferase from Rhizobium etli (strain ATCC 51251 / DSM 11541 / JCM 21823 / NBRC 15573 / CFN 42).